Reading from the N-terminus, the 195-residue chain is Protein GrpE (195 aa).

The protein belongs to the GrpE family. Homodimer.

The protein localises to the cytoplasm. Functionally, participates actively in the response to hyperosmotic and heat shock by preventing the aggregation of stress-denatured proteins, in association with DnaK and GrpE. It is the nucleotide exchange factor for DnaK and may function as a thermosensor. Unfolded proteins bind initially to DnaJ; upon interaction with the DnaJ-bound protein, DnaK hydrolyzes its bound ATP, resulting in the formation of a stable complex. GrpE releases ADP from DnaK; ATP binding to DnaK triggers the release of the substrate protein, thus completing the reaction cycle. Several rounds of ATP-dependent interactions between DnaJ, DnaK and GrpE are required for fully efficient folding. In Blochmanniella floridana, this protein is Protein GrpE.